Consider the following 394-residue polypeptide: Elongation factor Tu (394 aa).

One can recognise a tr-type G domain in the interval 10 to 204 (KPHVNVGTIG…HLDNYIPEPE (195 aa)). The tract at residues 19 to 26 (GHVDHGKT) is G1. 19–26 (GHVDHGKT) lines the GTP pocket. Threonine 26 lines the Mg(2+) pocket. The G2 stretch occupies residues 60 to 64 (GITIN). The G3 stretch occupies residues 81-84 (DCPG). GTP-binding positions include 81 to 85 (DCPGH) and 136 to 139 (NKCD). The interval 136-139 (NKCD) is G4. Residues 174–176 (SAL) are G5.

The protein belongs to the TRAFAC class translation factor GTPase superfamily. Classic translation factor GTPase family. EF-Tu/EF-1A subfamily. Monomer.

Its subcellular location is the cytoplasm. The enzyme catalyses GTP + H2O = GDP + phosphate + H(+). Functionally, GTP hydrolase that promotes the GTP-dependent binding of aminoacyl-tRNA to the A-site of ribosomes during protein biosynthesis. The protein is Elongation factor Tu of Histophilus somni (strain 129Pt) (Haemophilus somnus).